We begin with the raw amino-acid sequence, 538 residues long: Cytosolic Fe-S cluster assembly factor NAR1 homolog (538 aa).

Residues C19, C64, C67, C70, C218, C273, C453, and C457 each coordinate [4Fe-4S] cluster.

This sequence belongs to the NARF family.

It localises to the cytoplasm. The protein localises to the nucleus. In terms of biological role, component of the cytosolic Fe/S protein assembly machinery. Required for maturation of extramitochondrial Fe/S proteins. May play a role in the transfer of pre-assembled Fe/S clusters to target apoproteins. The sequence is that of Cytosolic Fe-S cluster assembly factor NAR1 homolog from Schizosaccharomyces pombe (strain 972 / ATCC 24843) (Fission yeast).